The chain runs to 207 residues: 3-hexulose-6-phosphate synthase (207 aa).

It belongs to the HPS/KGPDC family. HPS subfamily.

It carries out the reaction D-ribulose 5-phosphate + formaldehyde = D-arabino-hex-3-ulose 6-phosphate. Its pathway is one-carbon metabolism; formaldehyde assimilation via RuMP pathway; D-fructose 6-phosphate from D-ribulose 5-phosphate and formaldehyde: step 1/2. In terms of biological role, catalyzes the condensation of ribulose 5-phosphate with formaldehyde to form 3-hexulose 6-phosphate. This Mycobacterium gastri protein is 3-hexulose-6-phosphate synthase (rmpA).